The chain runs to 179 residues: 3-hydroxyanthranilate 3,4-dioxygenase 2 (179 aa).

O2 is bound at residue R44. 3 residues coordinate Fe cation: H48, E60, and H99. E60 provides a ligand contact to substrate. Substrate contacts are provided by R103 and E113.

The protein belongs to the 3-HAO family. Fe(2+) serves as cofactor.

Its subcellular location is the cytoplasm. The enzyme catalyses 3-hydroxyanthranilate + O2 = (2Z,4Z)-2-amino-3-carboxymuconate 6-semialdehyde. Its pathway is cofactor biosynthesis; NAD(+) biosynthesis; quinolinate from L-kynurenine: step 3/3. Its function is as follows. Catalyzes the oxidative ring opening of 3-hydroxyanthranilate to 2-amino-3-carboxymuconate semialdehyde, which spontaneously cyclizes to quinolinate. The sequence is that of 3-hydroxyanthranilate 3,4-dioxygenase 2 (bna1-2) from Aspergillus oryzae (strain ATCC 42149 / RIB 40) (Yellow koji mold).